Consider the following 361-residue polypeptide: Single-stranded DNA-binding protein 3 (361 aa).

An N-acetylmethionine modification is found at methionine 1. A LisH domain is found at 16–48; the sequence is AREKLALYVYEYLLHVGAQKSAQTFLSEIRWEK. Residues arginine 128, arginine 134, and arginine 138 each carry the asymmetric dimethylarginine modification. Disordered stretches follow at residues 140–166 and 184–361; these read GNQP…QQGH and PMGP…TMSV. Over residues 223-241 the composition is skewed to low complexity; sequence PNSANSIPYSSSSPGTYVG. Pro residues predominate over residues 245–255; the sequence is GGGPPGTPIMP. Residues 258–269 are compositionally biased toward polar residues; sequence ADSTNSSDNIYT. Residues 288 to 298 show a composition bias toward gly residues; that stretch reads GSDGPMGGMGG. A compositionally biased stretch (low complexity) spans 319 to 330; the sequence is NSPNNISGISNP. Serine 320, serine 325, and serine 328 each carry phosphoserine. Phosphothreonine is present on threonine 333. The segment covering 346–361 has biased composition (polar residues); it reads HSFQNDNYSPSMTMSV. Residues serine 354 and serine 360 each carry the phosphoserine modification.

The protein localises to the nucleus. Its function is as follows. May be involved in transcription regulation of the alpha 2(I) collagen gene where it binds to the single-stranded polypyrimidine sequences in the promoter region. The polypeptide is Single-stranded DNA-binding protein 3 (Ssbp3) (Rattus norvegicus (Rat)).